Consider the following 787-residue polypeptide: Bifunctional dethiobiotin synthetase/adenosylmethionine-8-amino-7-oxononanoate aminotransferase (787 aa).

D23–I28 provides a ligand contact to ATP. Residue T27 coordinates Mg(2+). T54 contributes to the substrate binding site. The Mg(2+) site is built by D61 and E123. ATP is bound by residues E123–G126 and K184–D185. W323–W324 contacts (8S)-8-amino-7-oxononanoate. G384–S385 is a pyridoxal 5'-phosphate binding site. Y421 is a binding site for (8S)-8-amino-7-oxononanoate. Residue D582 coordinates pyridoxal 5'-phosphate. (8S)-8-amino-7-oxononanoate-binding residues include K611 and G645. H646 to S647 is a pyridoxal 5'-phosphate binding site. R756 serves as a coordination point for (8S)-8-amino-7-oxononanoate.

It in the N-terminal section; belongs to the dethiobiotin synthetase family. In the C-terminal section; belongs to the class-III pyridoxal-phosphate-dependent aminotransferase family. BioA subfamily. Homodimer. It depends on Mg(2+) as a cofactor. The cofactor is pyridoxal 5'-phosphate.

It localises to the mitochondrion matrix. The enzyme catalyses (7R,8S)-7,8-diammoniononanoate + CO2 + ATP = (4R,5S)-dethiobiotin + ADP + phosphate + 3 H(+). It catalyses the reaction (8S)-8-amino-7-oxononanoate + S-adenosyl-L-methionine = S-adenosyl-4-methylsulfanyl-2-oxobutanoate + (7R,8S)-7,8-diammoniononanoate. The protein operates within cofactor biosynthesis; biotin biosynthesis; biotin from 7,8-diaminononanoate: step 1/2. It participates in cofactor biosynthesis; biotin biosynthesis; 7,8-diaminononanoate from 8-amino-7-oxononanoate (SAM route): step 1/1. In terms of biological role, bifunctional enzyme; part of the cluster involved in the biosynthesis of biotin (also known as vitamin B8 or vitamin H), a water-soluble vitamin that functions as a prosthetic group of many carboxylases, such as acetyl-CoA carboxylase and pyruvate carboxylase. Catalyzes a mechanistically unusual reaction, the ATP-dependent insertion of CO2 between the N7 and N8 nitrogen atoms of 7,8-diaminopelargonic acid (DAPA) to form an ureido ring. Also catalyzes the transfer of the alpha-amino group from S-adenosyl-L-methionine (SAM) to 7-keto-8-aminopelargonic acid (KAPA) to form 7,8-diaminopelargonic acid (DAPA). It is the only animotransferase known to utilize SAM as an amino donor. The sequence is that of Bifunctional dethiobiotin synthetase/adenosylmethionine-8-amino-7-oxononanoate aminotransferase from Emericella nidulans (strain FGSC A4 / ATCC 38163 / CBS 112.46 / NRRL 194 / M139) (Aspergillus nidulans).